A 142-amino-acid polypeptide reads, in one-letter code: GLTAADKTLIKSIWGKVEKETEAIGVEALVRLFKCFPQSKVYFDHFTDLSPSSQKLHAHAKVVLGALTKAVNHLDNITDTLHDISLVHAKKLLVDPVNFELLGHCLEVALAAHFATDFTPEVHLAIDKFLYEVEKALFETYR.

Positions 1 to 142 (GLTAADKTLI…VEKALFETYR (142 aa)) constitute a Globin domain. His59 contributes to the O2 binding site. His88 contacts heme b.

It belongs to the globin family. In terms of assembly, heterotetramer of two alpha chains and two beta chains (an easy dimerization is also reported). Red blood cells.

Functionally, involved in oxygen transport from the lung to the various peripheral tissues. This Latimeria chalumnae (Coelacanth) protein is Hemoglobin subunit alpha (HBA).